The primary structure comprises 319 residues: Tyrosine--tRNA ligase (319 aa).

An L-tyrosine-binding site is contributed by Tyr40. A 'HIGH' region motif is present at residues 45 to 53 (PSGRIHMGH). Residues Tyr159, Gln163, Asp166, and Gln181 each coordinate L-tyrosine. The short motif at 216–220 (KMSSS) is the 'KMSKS' region element. Ser219 serves as a coordination point for ATP.

It belongs to the class-I aminoacyl-tRNA synthetase family. TyrS type 3 subfamily. Homodimer.

The protein localises to the cytoplasm. It catalyses the reaction tRNA(Tyr) + L-tyrosine + ATP = L-tyrosyl-tRNA(Tyr) + AMP + diphosphate + H(+). Catalyzes the attachment of tyrosine to tRNA(Tyr) in a two-step reaction: tyrosine is first activated by ATP to form Tyr-AMP and then transferred to the acceptor end of tRNA(Tyr). This is Tyrosine--tRNA ligase from Methanococcus maripaludis (strain DSM 14266 / JCM 13030 / NBRC 101832 / S2 / LL).